Reading from the N-terminus, the 617-residue chain is Mitochondrial Rho GTPase 2 (617 aa).

Over 1 to 590 the chain is Cytoplasmic; it reads MKRDVRILLL…LNGSDMSSTS (590 aa). The region spanning 2–168 is the Miro 1 domain; it reads KRDVRILLLG…FYYAQKAVLH (167 aa). GTP contacts are provided by Gly16, Lys17, Thr18, and Ser19. Thr18 serves as a coordination point for Mg(2+). Asp57 lines the Mg(2+) pocket. Residues Ser59, Asn118, Lys119, Asp121, Ala149, and Lys150 each contribute to the GTP site. EF-hand domains are found at residues 184 to 219 and 304 to 339; these read QCVR…CFGN and LGHQ…LPYM. Positions 197, 199, 201, 208, 317, 319, 321, and 328 each coordinate Ca(2+). The Miro 2 domain maps to 416–578; it reads RTVFLCKVIG…YSKLTWAAMY (163 aa). Residues Gly428, Gly430, Lys431, and Thr432 each coordinate GTP. Mg(2+)-binding residues include Thr432 and Glu474. GTP contacts are provided by Lys528 and Asp530. A helical; Anchor for type IV membrane protein membrane pass occupies residues 591-613; it reads FWLRVTLGATIAAMLGFALYRAF. Topologically, residues 614–617 are mitochondrial intermembrane; the sequence is SRHK.

Belongs to the mitochondrial Rho GTPase family. Homodimer.

The protein resides in the mitochondrion outer membrane. The enzyme catalyses GTP + H2O = GDP + phosphate + H(+). It carries out the reaction ATP + H2O = ADP + phosphate + H(+). It catalyses the reaction UTP + H2O = UDP + phosphate + H(+). In terms of biological role, atypical mitochondrial nucleoside-triphosphatase (NTPase) involved in mitochondrial trafficking. Probably involved in control of anterograde transport of mitochondria and their subcellular distribution. Can hydrolyze GTP, ATP and UTP. The polypeptide is Mitochondrial Rho GTPase 2 (rhot2) (Danio rerio (Zebrafish)).